A 428-amino-acid polypeptide reads, in one-letter code: MLFPPSLPPTASGRSLGRVETPPGLVRFMVGLAEAPKGGRVLEPACADGPFLRAFREAHGTGYRFVGVEIDPHALDLPPWAEGVVADFLLWEPGEAFDLILGNPPYGIVGEASKYPIHVLREVKGLYKKTLSTWKGKYNLYGAFIEKSVRLLREGGTLVFVVPATWLVLDDFSLLRSFLAREGRTEVYYLGEVFPGRKVSAVVLRFRKGGKGLALWDTRRDGETFTPLLWSEKPEWKGEIIRFETGWTREMEASGPPLGSLFHIRFAARSPEFKKHPAVQKEPEPGLVPVLTGRNLKPGWIDYESNHSGLWMPKERAKELRDFYATPHLVVAHTKGTKVVAAWDEKAYPWREEFHLLPKEGVELDPLFLVEWLNSDKIQEYVKTLYRDFVPHLTLRMLERIPALLPRKGNTERRKHGPYTSPESAGSF.

The disordered stretch occupies residues 407-428; that stretch reads RKGNTERRKHGPYTSPESAGSF.

This sequence belongs to the N(4)/N(6)-methyltransferase family.

It carries out the reaction a 2'-deoxyadenosine in DNA + S-adenosyl-L-methionine = an N(6)-methyl-2'-deoxyadenosine in DNA + S-adenosyl-L-homocysteine + H(+). Its function is as follows. A gamma subtype methylase, recognizes the double-stranded sequence 5'-TCGA-3', methylates A-4 on both strands and protects the DNA from cleavage by the TthHB8I endonuclease. The polypeptide is Type II methyltransferase M.TthHB8I (Thermus thermophilus (strain ATCC 27634 / DSM 579 / HB8)).